The sequence spans 177 residues: MARFMAYNQNPQMLALCITVAVMFLGVRSELSQDIKGCQDAMSDLYSCLPFVTNKAKAPDSTCCSTLKVKIDKGQTRKCLCTLVKDRDDPGLGFKVDANRAMSLPSACHVPANISQCPDLLHLLPDSPASQIFKQFTESSSQTVGHKAVSTSSSIKGRDNKQFGLMMAGALSIWYIM.

The signal sequence occupies residues 1–29 (MARFMAYNQNPQMLALCITVAVMFLGVRS). 4 disulfides stabilise this stretch: Cys38/Cys81, Cys48/Cys63, Cys64/Cys108, and Cys79/Cys117. An N-linked (GlcNAc...) asparagine glycan is attached at Asn113. A lipid anchor (GPI-anchor amidated serine) is attached at Ser152. The propeptide at 153 to 177 (SSIKGRDNKQFGLMMAGALSIWYIM) is removed in mature form.

Belongs to the plant LTP family. Expressed in seedlings, preferentially in hypocotyls and roots. Also observed in siliques.

The protein localises to the cell membrane. Probable lipid transfer protein. The chain is Non-specific lipid transfer protein GPI-anchored 22 from Arabidopsis thaliana (Mouse-ear cress).